A 785-amino-acid chain; its full sequence is Conserved oligomeric Golgi complex subunit 4 (785 aa).

The disordered stretch occupies residues 1–24 (MADLDSPPKLSGVQQPSEGVGGGR). A2 carries the post-translational modification N-acetylalanine. The tract at residues 2-84 (ADLDSPPKLS…VTLHRMGPNL (83 aa)) is interaction with SCFD1. S6 is modified (phosphoserine). An interaction with STX5 region spans residues 85 to 153 (QLIEGDAKQL…TALRSEDYEQ (69 aa)). The interval 618–740 (PQVQPWINSF…SQMATILNLE (123 aa)) is d domain. The tract at residues 741–785 (RVTEILDYWGPNSGPLTWRLTPAEVRQVLALRIDFRSEDIKRLRL) is e domain; essential for proper cell surface glycosylation.

The protein belongs to the COG4 family. In terms of assembly, monomer. Component of the conserved oligomeric Golgi (COG) complex which is composed of eight different subunits and is required for normal Golgi morphology and localization. Mediates interaction of SCFD1 with the COG complex. Interacts with STX5.

It is found in the cytoplasm. It localises to the cytosol. The protein localises to the golgi apparatus membrane. Its function is as follows. Required for normal Golgi function. Plays a role in SNARE-pin assembly and Golgi-to-ER retrograde transport via its interaction with SCFD1. This Homo sapiens (Human) protein is Conserved oligomeric Golgi complex subunit 4 (COG4).